Here is a 496-residue protein sequence, read N- to C-terminus: DNA-dependent metalloprotease SPRTN (496 aa).

Methionine 1 is subject to N-acetylmethionine. Positions 45–212 (LQALFLQFND…KTCGGTYIKI (168 aa)) constitute a SprT-like domain. Histidine 111 is a binding site for Zn(2+). Residue glutamate 112 is part of the active site. 2 residues coordinate Zn(2+): histidine 115 and histidine 130. Lysine 230 carries the N6-acetyllysine modification. The short motif at 253–261 (FSGKGYVLG) is the SHP-box element. Serine 268 bears the Phosphoserine mark. Residue lysine 303 forms a Glycyl lysine isopeptide (Lys-Gly) (interchain with G-Cter in SUMO2) linkage. The PIP-box signature appears at 326 to 333 (QSVLSSYF). Lysine 342 is covalently cross-linked (Glycyl lysine isopeptide (Lys-Gly) (interchain with G-Cter in SUMO2); alternate). Lysine 342 is covalently cross-linked (Glycyl lysine isopeptide (Lys-Gly) (interchain with G-Cter in ubiquitin); alternate). The interval 346–459 (NVNGSPVKSG…STPRSSGGQR (114 aa)) is disordered. A Glycyl lysine isopeptide (Lys-Gly) (interchain with G-Cter in SUMO2) cross-link involves residue lysine 361. Residues 382-403 (SSKVTAPASATVTSAAGTSAAI) show a composition bias toward low complexity. Serine 383 carries the phosphoserine modification. The short motif at 412 to 423 (DQFLNKRPRLED) is the Nuclear localization signal element. Composition is skewed to polar residues over residues 426–437 (ALNNIKEQTQSG) and 445–457 (RPTA…SSGG). Residue lysine 431 forms a Glycyl lysine isopeptide (Lys-Gly) (interchain with G-Cter in SUMO2) linkage. The UBZ4-type zinc-finger motif lies at 461–488 (LVNCPVCQGVVLESQINEHLDRCLEGSK). Positions 464, 467, 479, and 483 each coordinate Zn(2+).

Belongs to the Spartan family. Homodimer. Interacts (VIA PIP-box) with PCNA (when ubiquitinated). Interacts (via its SHP-box) with VCP/p97. Interacts with RAD18. Interacts with KCTD13 and POLD3. The cofactor is Zn(2+). Post-translationally, autocatalytically cleaved in response to double-stranded DNA-binding: autocatalytic cleavage takes place in trans and leads to inactivation. Monoubiquitinated; monoubiquitination promotes exclusion from chromatin. Deubiquitinated by VCPIP1: deubiquitination is required for subsequent acetylation and recruitment to chromatin and DNA damage sites. In terms of processing, acetylated following deubiquitination by VCPIP1, leading to recruitment to chromatin and DNA damage sites. Post-translationally, phosphorylation by CHEK1 promotes recruitment to chromatin.

The protein resides in the nucleus. The protein localises to the chromosome. Its activity is regulated as follows. DNA-binding activates the protease activity: single-stranded DNA-binding specifically activates ability to cleave covalent DNA-protein cross-links (DPCs). In contrast, double-stranded DNA-binding specifically activates autocatalytic cleavage, and subsequent inactivation. DNA-dependent metalloendopeptidase that mediates the proteolytic cleavage of covalent DNA-protein cross-links (DPCs) during DNA synthesis, thereby playing a key role in maintaining genomic integrity. DPCs are highly toxic DNA lesions that interfere with essential chromatin transactions, such as replication and transcription, and which are induced by reactive agents, such as UV light or formaldehyde. Associates with the DNA replication machinery and specifically removes DPCs during DNA synthesis. Catalyzes proteolytic cleavage of the HMCES DNA-protein cross-link following unfolding by the BRIP1/FANCJ helicase. Acts as a pleiotropic protease for DNA-binding proteins cross-linked with DNA, such as TOP1, TOP2A, histones H3 and H4. Mediates degradation of DPCs that are not ubiquitinated, while it is not able to degrade ubiquitinated DPCs. SPRTN activation requires polymerase collision with DPCs followed by helicase bypass of DPCs. Involved in recruitment of VCP/p97 to sites of DNA damage. Also acts as an activator of CHEK1 during normal DNA replication by mediating proteolytic cleavage of CHEK1, thereby promoting CHEK1 removal from chromatin and subsequent activation. Does not activate CHEK1 in response to DNA damage. May also act as a 'reader' of ubiquitinated PCNA: recruited to sites of UV damage and interacts with ubiquitinated PCNA and RAD18, the E3 ubiquitin ligase that monoubiquitinates PCNA. Facilitates chromatin association of RAD18 and is required for efficient PCNA monoubiquitination, promoting a feed-forward loop to enhance PCNA ubiquitination and translesion DNA synthesis. The chain is DNA-dependent metalloprotease SPRTN from Rattus norvegicus (Rat).